We begin with the raw amino-acid sequence, 145 residues long: Basic phospholipase A2 PC16 (145 aa).

The first 21 residues, 1–21 (MYPAHLLLLLAVCVSLLGASA), serve as a signal peptide directing secretion. A propeptide spanning residues 22 to 27 (IPPLPL) is cleaved from the precursor. 7 disulfides stabilise this stretch: C38–C98, C54–C144, C56–C72, C71–C125, C78–C118, C87–C111, and C105–C116. Ca(2+)-binding residues include Y55, G57, and G59. The active site involves H75. D76 contributes to the Ca(2+) binding site. D119 is a catalytic residue.

This sequence belongs to the phospholipase A2 family. Group I subfamily. D49 sub-subfamily. It depends on Ca(2+) as a cofactor.

The protein localises to the secreted. The enzyme catalyses a 1,2-diacyl-sn-glycero-3-phosphocholine + H2O = a 1-acyl-sn-glycero-3-phosphocholine + a fatty acid + H(+). In terms of biological role, PLA2 catalyzes the calcium-dependent hydrolysis of the 2-acyl groups in 3-sn-phosphoglycerides. This Laticauda laticaudata (Blue-ringed sea krait) protein is Basic phospholipase A2 PC16.